The chain runs to 88 residues: Conotoxin Ca8.3 (88 aa).

The N-terminal stretch at 1-21 (MMLKMGAMFVLLLLFILPSSQ) is a signal peptide. A propeptide spanning residues 22 to 46 (QEGDVQARKTHLKSGFYGTLAMSTR) is cleaved from the precursor.

Belongs to the conotoxin S superfamily. In terms of processing, contains 5 disulfide bonds. Expressed by the venom duct.

Its subcellular location is the secreted. The polypeptide is Conotoxin Ca8.3 (Conus caracteristicus (Characteristic cone)).